A 513-amino-acid polypeptide reads, in one-letter code: CUGBP Elav-like family member 2 (513 aa).

3 RRM domains span residues 35–118 (IKMF…PADS), 127–207 (RKLF…FADT), and 428–506 (ANLF…LKRS).

Belongs to the CELF/BRUNOL family.

It is found in the nucleus. The protein localises to the cytoplasm. Functionally, RNA-binding protein implicated in the regulation of several post-transcriptional events. May be involved in pre-mRNA alternative splicing, mRNA translation repression and stability. This chain is CUGBP Elav-like family member 2 (celf2), found in Xenopus tropicalis (Western clawed frog).